The sequence spans 955 residues: Protein translocase subunit SecA (955 aa).

ATP contacts are provided by residues Q87, 105–109, and D494; that span reads GEGKT. A disordered region spans residues 861–955; the sequence is AAPAPAAPRP…KKAPRTKRKR (95 aa). Low complexity predominate over residues 874 to 888; sequence QEAAQQAQGTAAPSA. Over residues 943–955 the composition is skewed to basic residues; the sequence is SKGKKAPRTKRKR.

This sequence belongs to the SecA family. In terms of assembly, monomer and homodimer. Part of the essential Sec protein translocation apparatus which comprises SecA, SecYEG and auxiliary proteins SecDF. Other proteins may also be involved.

Its subcellular location is the cell membrane. It localises to the cytoplasm. It carries out the reaction ATP + H2O + cellular proteinSide 1 = ADP + phosphate + cellular proteinSide 2.. Part of the Sec protein translocase complex. Interacts with the SecYEG preprotein conducting channel. Has a central role in coupling the hydrolysis of ATP to the transfer of proteins into and across the cell membrane, serving as an ATP-driven molecular motor driving the stepwise translocation of polypeptide chains across the membrane. In Rhodococcus opacus (strain B4), this protein is Protein translocase subunit SecA.